The following is a 275-amino-acid chain: MGKSLSHLPLHSNKEDGYDGVTSTDNMRNGLVSSEVRNEDGRSGDVSQFPYVEFTGRDSVTCPTCQGTGRIPRGQENQLVALIPYSDQRLRPRRTKLYVMASVFVCLLLSGLAVFFLFPRSIDVKYIGVKSAYVSYDSQKRMIYLNITNTLNITNNNYYSVEVENITAQVQFSKTVIGKARLSNITNIGPLDMKQIDYTVPTVIAEEMSYMYDFCTLPSIKVHNIVLMMQVTVTTAYFGHSEQISQERYQYVDCGRNTTYQLAQSEYLNVLQPQQ.

Residues 1–24 form a disordered region; sequence MGKSLSHLPLHSNKEDGYDGVTST. Residue Gly2 is the site of N-myristoyl glycine attachment. Residues 2–97 lie on the Cytoplasmic side of the membrane; that stretch reads GKSLSHLPLH…QRLRPRRTKL (96 aa). The residue at position 34 (Ser34) is a Phosphoserine. A helical transmembrane segment spans residues 98–118; sequence YVMASVFVCLLLSGLAVFFLF. The Lumenal portion of the chain corresponds to 119–275; the sequence is PRSIDVKYIG…EYLNVLQPQQ (157 aa). Residues Asn146, Asn152, Asn165, and Asn184 are each glycosylated (N-linked (GlcNAc...) asparagine). Residues Cys215 and Cys254 are joined by a disulfide bond. Asn257 carries N-linked (GlcNAc...) asparagine glycosylation.

Belongs to the TMEM106 family. In terms of assembly, can form homomers. Interacts (via N-terminus) with MAP6 (via C-terminus). Interacts (via C-terminus) with the vacuolar-type ATPase subunit ATP6AP1. Interacts (via N-terminus) with AP2M1 and CLTC. Interacts with TMEM106C. Expressed in cortical neurons (at protein level).

It localises to the late endosome membrane. The protein localises to the lysosome membrane. Its subcellular location is the cell membrane. In terms of biological role, involved in dendrite morphogenesis and maintenance by regulating lysosomal trafficking. May act as a molecular brake for retrograde transport of late endosomes/lysosomes, possibly via its interaction with MAP6. In neurons, may also play a role in the regulation of lysosomal size and responsiveness to stress. Required for proper lysosomal acidification. In neurons, involved in the transport of late endosomes/lysosomes. May be involved in dendrite morphogenesis and maintenance by regulating lysosomal trafficking. May act as a molecular brake for retrograde transport of late endosomes/lysosomes, possibly via its interaction with MAP6. In motoneurons, may mediate the axonal transport of lysosomes and axonal sorting at the initial segment. It remains unclear whether TMEM106B affects the transport of moving lysosomes in the anterograde or retrograde direction in neurites and whether it is particularly important in the sorting of lysosomes in axons or in dendrites. In neurons, may also play a role in the regulation of lysosomal size and responsiveness to stress. Required for proper lysosomal acidification. This chain is Transmembrane protein 106B (Tmem106b), found in Rattus norvegicus (Rat).